We begin with the raw amino-acid sequence, 383 residues long: Protein delta homolog 1 (383 aa).

The first 23 residues, 1–23 (MIATGALLRVLLLLLAFGHSTYG), serve as a signal peptide directing secretion. 6 consecutive EGF-like domains span residues 24–55 (AECD…PLCE), 59–86 (TSPG…KFCE), 88–125 (DIRA…KDCQ), 127–168 (KAGP…NFCE), 170–206 (VTNS…KTCS), and 208–245 (PVSN…PTCA). The Extracellular segment spans residues 24 to 306 (AECDPACDPQ…PLLTEGQAIC (283 aa)). Intrachain disulfides connect cysteine 26–cysteine 37, cysteine 30–cysteine 43, cysteine 45–cysteine 54, cysteine 63–cysteine 68, cysteine 76–cysteine 85, cysteine 92–cysteine 103, cysteine 97–cysteine 113, cysteine 115–cysteine 124, cysteine 131–cysteine 144, cysteine 138–cysteine 156, cysteine 158–cysteine 167, cysteine 174–cysteine 185, cysteine 179–cysteine 194, cysteine 196–cysteine 205, cysteine 212–cysteine 223, cysteine 217–cysteine 233, and cysteine 235–cysteine 244. Residues 307–327 (FTILGVLTSLVVLGTVAIVFL) form a helical membrane-spanning segment. Residues 328–383 (NKCEAWVSNLRYNHMLRKKKNLLLQYNSGEELAVNIIFPEKIDMTTFNKEAGDEDI) are Cytoplasmic-facing.

Monomer. Interacts with SH3RF2. Post-translationally, glycosylated. As to expression, pancreas and adrenal glands (at protein level).

It localises to the membrane. It is found in the cytoplasm. Functionally, may have a role in neuroendocrine differentiation. Inhibits adipocyte differentiation. In Rattus norvegicus (Rat), this protein is Protein delta homolog 1 (Dlk1).